Here is a 70-residue protein sequence, read N- to C-terminus: U2-agatoxin-Ao1q (70 aa).

Residues 1 to 20 (MRSIISLLLISAMVFSMIAA) form the signal peptide. The propeptide occupies 21 to 34 (VPEEEGLQLSEDER). 2 disulfide bridges follow: Cys-44-Cys-58 and Cys-52-Cys-68. Leu-69 carries the post-translational modification Leucine amide.

Belongs to the neurotoxin 01 (U2-agtx) family. Does not contain a cysteine at position 53 which disrupts the cysteine framework. Expressed by the venom gland.

It is found in the secreted. Its function is as follows. Insect active toxin causing rapid but reversible paralysis in crickets. No activity shown in mammals. Does not show effect on mammalian voltage-gated calcium channels. This Agelena orientalis (Funnel-web spider) protein is U2-agatoxin-Ao1q.